Here is a 248-residue protein sequence, read N- to C-terminus: UDP-2,3-diacylglucosamine hydrolase (248 aa).

Residues Asp8, His10, Asp41, Asn79, and His114 each coordinate Mn(2+). A substrate-binding site is contributed by 79–80; that stretch reads NR. 4 residues coordinate substrate: Asp122, Ser160, Asp171, and His202. Mn(2+) is bound by residues His202 and His204.

The protein belongs to the LpxH family. The cofactor is Mn(2+).

The protein localises to the cell inner membrane. The enzyme catalyses UDP-2-N,3-O-bis[(3R)-3-hydroxytetradecanoyl]-alpha-D-glucosamine + H2O = 2-N,3-O-bis[(3R)-3-hydroxytetradecanoyl]-alpha-D-glucosaminyl 1-phosphate + UMP + 2 H(+). It functions in the pathway glycolipid biosynthesis; lipid IV(A) biosynthesis; lipid IV(A) from (3R)-3-hydroxytetradecanoyl-[acyl-carrier-protein] and UDP-N-acetyl-alpha-D-glucosamine: step 4/6. Its function is as follows. Hydrolyzes the pyrophosphate bond of UDP-2,3-diacylglucosamine to yield 2,3-diacylglucosamine 1-phosphate (lipid X) and UMP by catalyzing the attack of water at the alpha-P atom. Involved in the biosynthesis of lipid A, a phosphorylated glycolipid that anchors the lipopolysaccharide to the outer membrane of the cell. The chain is UDP-2,3-diacylglucosamine hydrolase from Stenotrophomonas maltophilia (strain R551-3).